The primary structure comprises 1034 residues: Probable isoleucine--tRNA ligase, mitochondrial (1034 aa).

The N-terminal 32 residues, 1–32, are a transit peptide targeting the mitochondrion; sequence MISLNNSFFNKRVIVNSFNNYKRSFGTKSQNE. Positions 94–104 match the 'HIGH' region motif; sequence PYANGDLHMGH. Positions 655–659 match the 'KMSKS' region motif; sequence KMSKS. Lys-658 serves as a coordination point for ATP.

Belongs to the class-I aminoacyl-tRNA synthetase family.

The protein resides in the mitochondrion matrix. The catalysed reaction is tRNA(Ile) + L-isoleucine + ATP = L-isoleucyl-tRNA(Ile) + AMP + diphosphate. In Dictyostelium discoideum (Social amoeba), this protein is Probable isoleucine--tRNA ligase, mitochondrial (mileS).